The primary structure comprises 30 residues: Gamma-II crystallin (30 aa).

A Beta/gamma crystallin 'Greek key' domain is found at 1–30 (GKITFYEDRNFQGRCYECSTDCPDLSPYFS).

This sequence belongs to the beta/gamma-crystallin family. In terms of assembly, monomer.

Functionally, crystallins are the dominant structural components of the vertebrate eye lens. This chain is Gamma-II crystallin, found in Rhizoprionodon acutus (Milk shark).